Reading from the N-terminus, the 73-residue chain is Toxin Td12 (73 aa).

The signal sequence occupies residues 1–7 (IGMVIEC). The LCN-type CS-alpha/beta domain maps to 8-70 (KDGYLMEPNG…TWDRATNTCG (63 aa)). 4 cysteine pairs are disulfide-bonded: Cys-18-Cys-69, Cys-22-Cys-44, Cys-30-Cys-50, and Cys-34-Cys-52. Arg-71 carries the arginine amide modification.

The protein belongs to the long (4 C-C) scorpion toxin superfamily. Sodium channel inhibitor family. Beta subfamily. In terms of tissue distribution, expressed by the venom gland.

Its subcellular location is the secreted. Functionally, beta toxins bind voltage-independently at site-4 of sodium channels (Nav) and shift the voltage of activation toward more negative potentials thereby affecting sodium channel activation and promoting spontaneous and repetitive firing. This is Toxin Td12 from Tityus discrepans (Venezuelan scorpion).